A 64-amino-acid polypeptide reads, in one-letter code: Sperm protamine P1 (64 aa).

The interval 1–64 (MVRYRRHSRS…QSRRRRRRRY (64 aa)) is disordered.

This sequence belongs to the protamine P1 family. In terms of tissue distribution, testis.

Its subcellular location is the nucleus. It localises to the chromosome. Its function is as follows. Protamines substitute for histones in the chromatin of sperm during the haploid phase of spermatogenesis. They compact sperm DNA into a highly condensed, stable and inactive complex. This is Sperm protamine P1 (PRM1) from Dromiciops gliroides (Monito del Monte).